Consider the following 188-residue polypeptide: Elongation factor P (188 aa).

It belongs to the elongation factor P family.

The protein localises to the cytoplasm. The protein operates within protein biosynthesis; polypeptide chain elongation. Involved in peptide bond synthesis. Stimulates efficient translation and peptide-bond synthesis on native or reconstituted 70S ribosomes in vitro. Probably functions indirectly by altering the affinity of the ribosome for aminoacyl-tRNA, thus increasing their reactivity as acceptors for peptidyl transferase. The sequence is that of Elongation factor P from Nitrobacter winogradskyi (strain ATCC 25391 / DSM 10237 / CIP 104748 / NCIMB 11846 / Nb-255).